We begin with the raw amino-acid sequence, 952 residues long: Glycine dehydrogenase (decarboxylating) (952 aa).

Lysine 696 carries the N6-(pyridoxal phosphate)lysine modification.

The protein belongs to the GcvP family. The glycine cleavage system is composed of four proteins: P, T, L and H. Requires pyridoxal 5'-phosphate as cofactor.

The catalysed reaction is N(6)-[(R)-lipoyl]-L-lysyl-[glycine-cleavage complex H protein] + glycine + H(+) = N(6)-[(R)-S(8)-aminomethyldihydrolipoyl]-L-lysyl-[glycine-cleavage complex H protein] + CO2. Functionally, the glycine cleavage system catalyzes the degradation of glycine. The P protein binds the alpha-amino group of glycine through its pyridoxal phosphate cofactor; CO(2) is released and the remaining methylamine moiety is then transferred to the lipoamide cofactor of the H protein. The chain is Glycine dehydrogenase (decarboxylating) from Pelagibacter ubique (strain HTCC1062).